The following is a 379-amino-acid chain: Small ribosomal subunit protein uS2cy (379 aa).

The interval 1 to 94 (MKLVQFFEIG…MGTSSNRAKS (94 aa)) is N-terminal extension. Residues 83 to 106 (NQMGTSSNRAKSTDTPAVSTSQNV) form a disordered region.

The protein belongs to the universal ribosomal protein uS2 family.

The protein localises to the plastid. It localises to the chloroplast. This Tetradesmus obliquus (Green alga) protein is Small ribosomal subunit protein uS2cy (rps2-2).